Here is a 348-residue protein sequence, read N- to C-terminus: Anthranilate phosphoribosyltransferase (348 aa).

Residues glycine 91, 94–95 (GD), threonine 99, 101–104 (NIST), 119–127 (KHGNRSASG), and serine 131 contribute to the 5-phospho-alpha-D-ribose 1-diphosphate site. Glycine 91 lines the anthranilate pocket. Serine 103 serves as a coordination point for Mg(2+). Asparagine 122 is a binding site for anthranilate. Arginine 177 provides a ligand contact to anthranilate. The Mg(2+) site is built by aspartate 236 and glutamate 237.

Belongs to the anthranilate phosphoribosyltransferase family. As to quaternary structure, homodimer. It depends on Mg(2+) as a cofactor.

The enzyme catalyses N-(5-phospho-beta-D-ribosyl)anthranilate + diphosphate = 5-phospho-alpha-D-ribose 1-diphosphate + anthranilate. It functions in the pathway amino-acid biosynthesis; L-tryptophan biosynthesis; L-tryptophan from chorismate: step 2/5. Its function is as follows. Catalyzes the transfer of the phosphoribosyl group of 5-phosphorylribose-1-pyrophosphate (PRPP) to anthranilate to yield N-(5'-phosphoribosyl)-anthranilate (PRA). This chain is Anthranilate phosphoribosyltransferase, found in Synechococcus elongatus (strain ATCC 33912 / PCC 7942 / FACHB-805) (Anacystis nidulans R2).